We begin with the raw amino-acid sequence, 921 residues long: MLWHYKISPHLSVITNSEPTMSNAVTAETANTNNTSIENAQYQPQLIEAAQQAKWATDKRFEVSNEPSDKPSRYMLSMFPYPSGKLHMGHVRNYTISDVLSRYYRLKGYEVMQPMGWDGFGLPAENAAIANQTPPAKWTFENIDSMRAQLKLLGLSIDWSREFATCSPEYYQWEQWLFLQLYKKGLVYKKLATVNWDPIDNTVLANEQVIDGKGWRSGAMVEKRDIPMYYFNITDYADELLDDLDQLEGHWPSEVITMQRNWIGRSSGMEVHFPYELAGESNSLDVFTTRPDTLMGVTYVAVAAEHPLAQYASEHNEAIAAFCALCKKGSVAEADLAKAEKVGIDTGLTVTHPLTGEEVPVWVANYVLMSYGSGAVMAVPAHDERDYEFATKYSLPIKQVIDIPARYFDDIEEGNDNRAYTERNTLVNSGEFDGMDFEQAFAAMLAKLEPQSLAKKKIQYRLRDWGVSRQRYWGCPIPMVNCEHCGTVPVEEQDLPVILPTDVVPDGRGNPLKNIPEFVNTTCPKCGNPAERETDTFDTFVESSWYYARFASPNDTTNMVNKSAANKWLPVDQYIGGVEHAVMHLLYARFFHKLMRDENLVSGDEPFANLMTQGMVLAGTFYRVNPDGSTTYYFTKDIDIDFNERGQPIKAILKSDGQPVTIGKIEKMSKSKNNGVDPQITIDKYGADTVRLYTLFTAPADQTLEWSDDALKGPYNFVKKVWRIASEHMQALTAANLSLDTLNNGTLNNDALNTEGLSKEAKALRRKTHETIGKIDSDLGKRLALNTPVSSLMELANELSNFKANSEQELQVQHEALIDLLIMLSVYAPHIGEHLLEQLGLDTVTLNYPAVDESALVQDMITMVIQVNGKMRGKMDVAPNSDPEALKAQARAIEGVAKFLTGEIKKEIVVPNKLVNIVVAG.

The 'HIGH' region signature appears at 80 to 90 (PYPSGKLHMGH). Positions 667-671 (KMSKS) match the 'KMSKS' region motif. Residue Lys-670 participates in ATP binding.

It belongs to the class-I aminoacyl-tRNA synthetase family.

Its subcellular location is the cytoplasm. The enzyme catalyses tRNA(Leu) + L-leucine + ATP = L-leucyl-tRNA(Leu) + AMP + diphosphate. This is Leucine--tRNA ligase from Psychrobacter arcticus (strain DSM 17307 / VKM B-2377 / 273-4).